The primary structure comprises 735 residues: Protein STRUBBELIG-RECEPTOR FAMILY 2 (735 aa).

The N-terminal stretch at 1 to 23 is a signal peptide; it reads MKTKQQLRFLATILLTTILFVLA. At 24–297 the chain is on the extracellular side; that stretch reads KTDTDPLEVL…KKKKKGIGAG (274 aa). LRR repeat units follow at residues 78–94, 96–119, 120–140, 142–163, 165–187, 189–211, 212–232, and 233–253; these read LRELKLLGSLGNQLQHL, NLKILDVSFNNLEGEIPFGLPPNA, THINMAYNNLTQSIPFSLPLM, SLQSLNLSHNSLSGPLGNVFSG, QIKEMDLSFNNLTGDLPSSFGTL, NLTSLYLQNNRLTGSVIYLADLP, LADLNIEDNQFSGIIPSHFQS, and IPHLWIWGNKFHVEPNYKPWK. Residues Asn-118, Asn-128, Asn-147, Asn-175, and Asn-189 are each glycosylated (N-linked (GlcNAc...) asparagine). Asn-264 is a glycosylation site (N-linked (GlcNAc...) asparagine). Residues 298-318 form a helical membrane-spanning segment; that stretch reads STFLLVGGLALLGTFFALFAV. At 319–735 the chain is on the cytoplasmic side; that stretch reads RMNHRRAQNL…SSPTFSYLSS (417 aa). The disordered stretch occupies residues 358–378; the sequence is PQIKRFQPPPAPQLRHLPSPP. Positions 415–695 constitute a Protein kinase domain; that stretch reads FSEENLLGEG…EIVEALTALI (281 aa).

It belongs to the protein kinase superfamily. Ser/Thr protein kinase family. As to expression, expressed in seedlings, roots, stems, leaves, flowers and siliques.

Its subcellular location is the membrane. In Arabidopsis thaliana (Mouse-ear cress), this protein is Protein STRUBBELIG-RECEPTOR FAMILY 2 (SRF2).